Here is a 220-residue protein sequence, read N- to C-terminus: 2-hydroxy-3-keto-5-methylthiopentenyl-1-phosphate phosphatase (220 aa).

The protein belongs to the HAD-like hydrolase superfamily. MtnX family.

It carries out the reaction 2-hydroxy-5-methylsulfanyl-3-oxopent-1-enyl phosphate + H2O = 1,2-dihydroxy-5-(methylsulfanyl)pent-1-en-3-one + phosphate. Its pathway is amino-acid biosynthesis; L-methionine biosynthesis via salvage pathway; L-methionine from S-methyl-5-thio-alpha-D-ribose 1-phosphate: step 4/6. Dephosphorylates 2-hydroxy-3-keto-5-methylthiopentenyl-1-phosphate (HK-MTPenyl-1-P) yielding 1,2-dihydroxy-3-keto-5-methylthiopentene (DHK-MTPene). The chain is 2-hydroxy-3-keto-5-methylthiopentenyl-1-phosphate phosphatase from Geobacillus kaustophilus (strain HTA426).